The following is a 764-amino-acid chain: uncharacterized protein (764 aa).

The Lumenal portion of the chain corresponds to 1–646 (MKEENGFAGF…LTKLYTFPFT (646 aa)). The interval 22 to 173 (LNDTAPTKSQ…SAITAPSRKV (152 aa)) is disordered. The N-linked (GlcNAc...) asparagine glycan is linked to Asn23. Polar residues-rich tracts occupy residues 25-41 (TAPT…NNEG) and 61-82 (SEAS…QSPS). Ser80 carries the phosphoserine modification. Positions 98–113 (ENQENEADEAENEETS) are enriched in acidic residues. Asn118 carries N-linked (GlcNAc...) asparagine glycosylation. Over residues 118-145 (NHTENTEEIAEESRPLERTHSGSNHHEA) the composition is skewed to basic and acidic residues. Residues 158–173 (NTLSQGSAITAPSRKV) show a composition bias toward polar residues. A GRAM domain is found at 197-264 (RDFHRIFKVL…TEIVSVEKKS (68 aa)). Asn240 and Asn330 each carry an N-linked (GlcNAc...) asparagine glycan. Positions 320–406 (ASGNHHSGSS…DGNSVKKMNE (87 aa)) are disordered. The segment covering 321–330 (SGNHHSGSSN) has biased composition (low complexity). Positions 331-340 (QSINADSSAG) are enriched in polar residues. A compositionally biased stretch (acidic residues) spans 352–371 (ANDESSEDDDEDNNTDEANE). N-linked (GlcNAc...) asparagine glycosylation is found at Asn364 and Asn376. Positions 389 to 399 (HSDNVVLSDGN) are enriched in polar residues. The region spanning 432–598 (LAHVLCSDVV…AFENYKVSPK (167 aa)) is the VASt domain. N-linked (GlcNAc...) asparagine glycans are attached at residues Asn442 and Asn554. Basic residues predominate over residues 598–613 (KGRRKKITKHTKKKNK). Residues 598 to 626 (KGRRKKITKHTKKKNKHASETSVAPEKVD) form a disordered region. Residue Asn627 is glycosylated (N-linked (GlcNAc...) asparagine). A helical transmembrane segment spans residues 647–667 (IITWLMHPTHLLLVVMFSMLV). At 668 to 764 (LQWWYMQQIL…LRKLEASGYI (97 aa)) the chain is on the cytoplasmic side.

The protein belongs to the YSP2 family.

Its subcellular location is the membrane. This is an uncharacterized protein from Schizosaccharomyces pombe (strain 972 / ATCC 24843) (Fission yeast).